The primary structure comprises 528 residues: Protein spinster homolog 1 (528 aa).

The segment at 1–49 (MAGSDTAPFLSQADDPDDGPVPGTPGLPGSTGNPKSEEPEVPDQEGLQR) is disordered. Ala2 carries the post-translational modification N-acetylalanine. The next 12 membrane-spanning stretches (helical) occupy residues 50 to 70 (ITGL…YINL), 98 to 118 (GLIQ…FGYL), 127 to 147 (LMCG…FIPG), 160 to 180 (VGVG…DLFV), 187 to 207 (MLSI…IAGS), 218 to 238 (WALR…FLVV), 278 to 298 (LGFT…PAFL), 323 to 343 (LIFG…GVEI), 357 to 377 (LVCA…LACA), 381 to 401 (IVAT…NWAI), 421 to 441 (FQIV…IGLI), and 465 to 485 (MLCA…AIFI). Ser518 is subject to Phosphoserine.

The protein belongs to the major facilitator superfamily. Spinster (TC 2.A.1.49) family. Interacts with BCL2 and BCL2L1.

It localises to the lysosome membrane. Its subcellular location is the mitochondrion inner membrane. It carries out the reaction a 1-acyl-sn-glycero-3-phosphocholine(out) + H(+)(out) = a 1-acyl-sn-glycero-3-phosphocholine(in) + H(+)(in). The catalysed reaction is 1-hexadecanoyl-sn-glycero-3-phosphocholine(out) + H(+)(out) = 1-hexadecanoyl-sn-glycero-3-phosphocholine(in) + H(+)(in). The enzyme catalyses 1-(9Z-octadecenoyl)-sn-glycero-3-phosphocholine(out) + H(+)(out) = 1-(9Z-octadecenoyl)-sn-glycero-3-phosphocholine(in) + H(+)(in). It catalyses the reaction 1-(5Z,8Z,11Z,14Z-eicosatetraenoyl)-sn-glycero-3-phosphocholine(out) + H(+)(out) = 1-(5Z,8Z,11Z,14Z-eicosatetraenoyl)-sn-glycero-3-phosphocholine(in) + H(+)(in). It carries out the reaction 1-(4Z,7Z,10Z,13Z,16Z,19Z-docosahexaenoyl)-sn-glycero-3-phosphocholine(out) + H(+)(out) = 1-(4Z,7Z,10Z,13Z,16Z,19Z-docosahexaenoyl)-sn-glycero-3-phosphocholine(in) + H(+)(in). The catalysed reaction is a 1-acyl-sn-glycero-3-phosphoethanolamine(out) + H(+)(out) = a 1-acyl-sn-glycero-3-phosphoethanolamine(in) + H(+)(in). The enzyme catalyses 1-(9Z-octadecenoyl)-sn-glycero-3-phosphoethanolamine(out) + H(+)(out) = 1-(9Z-octadecenoyl)-sn-glycero-3-phosphoethanolamine(in) + H(+)(in). It catalyses the reaction 1-acyl-sn-glycero-3-phospho-(1'-sn-glycerol)(out) + H(+)(out) = 1-acyl-sn-glycero-3-phospho-(1'-sn-glycerol)(in) + H(+)(in). It carries out the reaction 1-(9Z-octadecenoyl)-sn-glycero-3-phospho-(1'-sn-glycerol)(out) + H(+)(out) = 1-(9Z-octadecenoyl)-sn-glycero-3-phospho-(1'-sn-glycerol)(in) + H(+)(in). The catalysed reaction is a 1-O-(1Z-alkenyl)-sn-glycero-3-phosphocholine(out) + H(+)(out) = a 1-O-(1Z-alkenyl)-sn-glycero-3-phosphocholine(in) + H(+)(in). The enzyme catalyses 1-(1Z-hexadecenyl)-sn-glycero-3-phosphocholine(out) + H(+)(out) = 1-(1Z-hexadecenyl)-sn-glycero-3-phosphocholine(in) + H(+)(in). It catalyses the reaction a 1-O-(1Z-alkenyl)-sn-glycero-3-phosphoethanolamine(out) + H(+)(out) = a 1-O-(1Z-alkenyl)-sn-glycero-3-phosphoethanolamine(in) + H(+)(in). It carries out the reaction 1-O-(1Z-hexadecenyl)-sn-glycero-3-phosphoethanolamine(out) + H(+)(out) = 1-O-(1Z-hexadecenyl)-sn-glycero-3-phosphoethanolamine(in) + H(+)(in). Functionally, plays a critical role in the phospholipid salvage pathway from lysosomes to the cytosol. Mediates the rate-limiting, proton-dependent, lysosomal efflux of lysophospholipids, which can then be reacylated by acyltransferases in the endoplasmic reticulum to form phospholipids. Selective for zwitterionic headgroups such as lysophosphatidylcholine (LPC) and lysophosphatidylethanolamine (LPE), can also transport lysophosphatidylglycerol (LPG), but not other anionic lysophospholipids, sphingosine, nor sphingomyelin. Transports lysophospholipids with saturated, monounsaturated, and polyunsaturated fatty acids, such as 1-hexadecanoyl-sn-glycero-3-phosphocholine, 1-(9Z-octadecenoyl)-sn-glycero-3-phosphocholine and 1-(4Z,7Z,10Z,13Z,16Z,19Z-docosahexaenoyl)-sn-glycero-3-phosphocholine, respectively. Can also transport lysoplasmalogen (LPC with a fatty alcohol) such as 1-(1Z-hexadecenyl)-sn-glycero-3-phosphocholine. Lysosomal LPC could function as intracellular signaling messenger. Essential player in lysosomal homeostasis. Crucial for cell survival under conditions of nutrient limitation. May be involved in necrotic or autophagic cell death. The polypeptide is Protein spinster homolog 1 (SPNS1) (Homo sapiens (Human)).